The sequence spans 88 residues: Putative membrane protein insertion efficiency factor (88 aa).

The protein belongs to the UPF0161 family.

Its subcellular location is the cell inner membrane. Could be involved in insertion of integral membrane proteins into the membrane. The polypeptide is Putative membrane protein insertion efficiency factor (Koribacter versatilis (strain Ellin345)).